Reading from the N-terminus, the 82-residue chain is Small ribosomal subunit protein uS17 (82 aa).

It belongs to the universal ribosomal protein uS17 family. In terms of assembly, part of the 30S ribosomal subunit.

One of the primary rRNA binding proteins, it binds specifically to the 5'-end of 16S ribosomal RNA. The sequence is that of Small ribosomal subunit protein uS17 from Sulfurimonas denitrificans (strain ATCC 33889 / DSM 1251) (Thiomicrospira denitrificans (strain ATCC 33889 / DSM 1251)).